Consider the following 775-residue polypeptide: Ubiquitin carboxyl-terminal hydrolase 14 (775 aa).

The UBP-type 1; degenerate zinc-finger motif lies at 1–108 (MSCPHLTETN…EDLYDYFYVP (108 aa)). 20 residues coordinate Zn(2+): C25, C28, C41, C44, C49, H56, H60, H66, C153, H155, C174, C177, C186, C189, C194, H207, H211, H217, C236, and C239. The UBP-type 2 zinc finger occupies 151–259 (TTCDHIINLP…THMLNFGIDI (109 aa)). In terms of domain architecture, USP spans 300–774 (TGLKNLGNSC…TGYVYLFERL (475 aa)). C309 functions as the Nucleophile in the catalytic mechanism. S456 is modified (phosphoserine). UBA domains are found at residues 576 to 617 (EWNQ…LFEH) and 639 to 679 (SVSE…ILNH). The active-site Proton acceptor is H730.

Belongs to the peptidase C19 family.

It carries out the reaction Thiol-dependent hydrolysis of ester, thioester, amide, peptide and isopeptide bonds formed by the C-terminal Gly of ubiquitin (a 76-residue protein attached to proteins as an intracellular targeting signal).. The polypeptide is Ubiquitin carboxyl-terminal hydrolase 14 (ubp14) (Schizosaccharomyces pombe (strain 972 / ATCC 24843) (Fission yeast)).